A 78-amino-acid polypeptide reads, in one-letter code: Acyl carrier protein (78 aa).

The Carrier domain occupies 2–77; the sequence is STIEESVKAI…AAIDFIQASQ (76 aa). An O-(pantetheine 4'-phosphoryl)serine modification is found at serine 37.

Belongs to the acyl carrier protein (ACP) family. 4'-phosphopantetheine is transferred from CoA to a specific serine of apo-ACP by AcpS. This modification is essential for activity because fatty acids are bound in thioester linkage to the sulfhydryl of the prosthetic group.

The protein localises to the cytoplasm. It participates in lipid metabolism; fatty acid biosynthesis. Carrier of the growing fatty acid chain in fatty acid biosynthesis. This Sodalis glossinidius (strain morsitans) protein is Acyl carrier protein.